Here is a 593-residue protein sequence, read N- to C-terminus: PiggyBac transposable element-derived protein 3 (593 aa).

2 disordered regions span residues 27–53 and 69–105; these read IQPPENATAPVSDEESGDEEGGTINNL and SDAESDSDDPSYAPKDDSPDEVPSTFTVQQPPPSRRR. Residues 38–47 are compositionally biased toward acidic residues; it reads SDEESGDEEG. Serine 86 carries the phosphoserine modification.

As to expression, expressed in heart and oocytes, but not in granulosa cells (at protein level).

The protein localises to the nucleus. Binds in vitro to PGBD3-related transposable elements, called MER85s; these non-autonomous 140 bp elements are characterized by the presence of PGBD3 terminal inverted repeats and the absence of internal transposase ORF. This Homo sapiens (Human) protein is PiggyBac transposable element-derived protein 3 (PGBD3).